The following is a 607-amino-acid chain: Elongation factor 4 (607 aa).

The tr-type G domain occupies 11–193 (EKIRNFSIIA…QIVEKVPAPQ (183 aa)). Residues 23–28 (DHGKST) and 140–143 (NKID) contribute to the GTP site.

It belongs to the TRAFAC class translation factor GTPase superfamily. Classic translation factor GTPase family. LepA subfamily.

It localises to the cell membrane. It carries out the reaction GTP + H2O = GDP + phosphate + H(+). In terms of biological role, required for accurate and efficient protein synthesis under certain stress conditions. May act as a fidelity factor of the translation reaction, by catalyzing a one-codon backward translocation of tRNAs on improperly translocated ribosomes. Back-translocation proceeds from a post-translocation (POST) complex to a pre-translocation (PRE) complex, thus giving elongation factor G a second chance to translocate the tRNAs correctly. Binds to ribosomes in a GTP-dependent manner. The protein is Elongation factor 4 of Lactococcus lactis subsp. cremoris (strain MG1363).